An 822-amino-acid chain; its full sequence is Cadherin-3 (822 aa).

The first 25 residues, 1-25, serve as a signal peptide directing secretion; that stretch reads MELLSGPHAFLLLLLQVCWLRSVVS. Positions 26 to 99 are excised as a propeptide; the sequence is EPYRAGFIGE…PTRILRRRKR (74 aa). Cadherin domains are found at residues 100–207, 208–320, 321–432, 433–538, and 539–645; these read EWVM…KPKF, TQDT…APEF, EPQK…APVF, VPPS…DHGP, and IPEP…RPWK. The Extracellular portion of the chain corresponds to 100 to 647; it reads EWVMPPIFVP…NDCPRPWKGG (548 aa). The N-linked (GlcNAc...) asparagine glycan is linked to N192. N558 is a glycosylation site (N-linked (GlcNAc...) asparagine). A helical transmembrane segment spans residues 648-670; that stretch reads FILPILGAVLALLTLLLALLLLV. Residues 671–822 lie on the Cytoplasmic side of the membrane; sequence RKKRKVKEPL…ADMYGGGEDD (152 aa).

Interacts with CDCP1 and CTNNB1.

The protein localises to the cell membrane. In terms of biological role, cadherins are calcium-dependent cell adhesion proteins. They preferentially interact with themselves in a homophilic manner in connecting cells; cadherins may thus contribute to the sorting of heterogeneous cell types. This is Cadherin-3 (Cdh3) from Mus musculus (Mouse).